A 322-amino-acid polypeptide reads, in one-letter code: RNA pseudouridine synthase 1 (322 aa).

Aspartate 120 is an active-site residue.

The protein belongs to the pseudouridine synthase RluA family.

The catalysed reaction is a uridine in RNA = a pseudouridine in RNA. This chain is RNA pseudouridine synthase 1, found in Arabidopsis thaliana (Mouse-ear cress).